The primary structure comprises 811 residues: MPLSSPNAAATASDMDKNSGSNSSSASSGSSKGQQPPRSASAGPAGESKPKSDGKNSSGSKRYNRKRELSYPKNESFNNQSRRSSSQKSKTFNKMPPQRGGGSSKLFSSSFNGGRRDEVAEAQRAEFSPAQFSGPKKINLNHLLNFTFEPRGQTGHFEGSGHGSWGKRNKWGHKPFNKELFLQANCQFVVSEDQDYTAHFADPDTLVNWDFVEQVRICSHEVPSCPICLYPPTAAKITRCGHIFCWACILHYLSLSEKTWSKCPICYSSVHKKDLKSVVATESHQYVVGDTITMQLMKREKGVLVALPKSKWMNVDHPIHLGDEQHSQYSKLLLASKEQVLHRVVLEEKVALEQQLAEEKHTPESCFIEAAIQELKTREEALSGLAGSRREVTGVVAALEQLVLMAPLAKESVFQPRKGVLEYLSAFDEETTEVCSLDTPSRPLALPLVEEEEAVSEPEPEGLPEACDDLELADDNLKEGTICTESSQQEPITKSGFTRLSSSPCYYFYQAEDGQHMFLHPVNVRCLVREYGSLERSPEKISATVVEIAGYSMSEDVRQRHRYLSHLPLTCEFSICELALQPPVVSKETLEMFSDDIEKRKRQRQKKAREERRRERRIEIEENKKQGKYPEVHIPLENLQQFPAFNSYTCSSDSALGPTSTEGHGALSISPLSRSPGSHADFLLTPLSPTASQGSPSFCVGSLEEDSPFPSFAQMLRVGKAKADVWPKTAPKKDENSLVPPAPVDSDGESDNSDRVPVPSFQNSFSQAIEAAFMKLDTPATSDPLSEEKGGKKRKKQKQKLLFSTSVVHTK.

The segment covering 1 to 10 (MPLSSPNAAA) has biased composition (polar residues). The tract at residues 1-119 (MPLSSPNAAA…SFNGGRRDEV (119 aa)) is disordered. S5 carries the post-translational modification Phosphoserine. 3 stretches are compositionally biased toward low complexity: residues 18 to 31 (NSGS…SGSS), 78 to 90 (NNQS…QKSK), and 104 to 113 (SKLFSSSFNG). An interaction with MEOX2 region spans residues 101 to 185 (GGSSKLFSSS…FNKELFLQAN (85 aa)). Phosphoserine is present on residues S110 and S128. The RING-type zinc finger occupies 225-267 (CPICLYPPTAAKITRCGHIFCWACILHYLSLSEKTWSKCPICY). A compositionally biased stretch (polar residues) spans 653-662 (DSALGPTSTE). Disordered regions lie at residues 653–672 (DSAL…ISPL), 724–761 (DVWP…VPSF), and 776–811 (LDTP…VHTK). Residues 724–736 (DVWPKTAPKKDEN) show a composition bias toward basic and acidic residues. Polar residues predominate over residues 802–811 (LFSTSVVHTK).

The protein belongs to the RNF10 family. As to quaternary structure, interacts with MEOX2.

The protein resides in the cytoplasm. Its subcellular location is the nucleus. The catalysed reaction is S-ubiquitinyl-[E2 ubiquitin-conjugating enzyme]-L-cysteine + [acceptor protein]-L-lysine = [E2 ubiquitin-conjugating enzyme]-L-cysteine + N(6)-ubiquitinyl-[acceptor protein]-L-lysine.. It functions in the pathway protein modification; protein ubiquitination. In terms of biological role, E3 ubiquitin-protein ligase that catalyzes monoubiquitination of 40S ribosomal proteins RPS2/us5 and RPS3/us3 in response to ribosome stalling. Part of a ribosome quality control that takes place when ribosomes have stalled during translation initiation (iRQC): RNF10 acts by mediating monoubiquitination of RPS2/us5 and RPS3/us3, promoting their degradation by the proteasome. Also promotes ubiquitination of 40S ribosomal proteins in response to ribosome stalling during translation elongation. The action of RNF10 in iRQC is counteracted by USP10. May also act as a transcriptional factor involved in the regulation of MAG (Myelin-associated glycoprotein) expression. Acts as a regulator of Schwann cell differentiation and myelination. The polypeptide is E3 ubiquitin-protein ligase RNF10 (Homo sapiens (Human)).